The chain runs to 262 residues: Tropinone reductase homolog At2g29310 (262 aa).

13–37 contributes to the NADP(+) binding site; it reads LVTGAASGIGYAIVEELASFGAIIH. Ser-146 serves as a coordination point for substrate. The Proton acceptor role is filled by Tyr-159.

It belongs to the short-chain dehydrogenases/reductases (SDR) family. SDR65C subfamily.

In Arabidopsis thaliana (Mouse-ear cress), this protein is Tropinone reductase homolog At2g29310.